We begin with the raw amino-acid sequence, 179 residues long: Large ribosomal subunit protein uL6 (179 aa).

Belongs to the universal ribosomal protein uL6 family. Part of the 50S ribosomal subunit.

In terms of biological role, this protein binds to the 23S rRNA, and is important in its secondary structure. It is located near the subunit interface in the base of the L7/L12 stalk, and near the tRNA binding site of the peptidyltransferase center. This Bifidobacterium longum subsp. infantis (strain ATCC 15697 / DSM 20088 / JCM 1222 / NCTC 11817 / S12) protein is Large ribosomal subunit protein uL6.